Reading from the N-terminus, the 197-residue chain is Imidazoleglycerol-phosphate dehydratase (197 aa).

This sequence belongs to the imidazoleglycerol-phosphate dehydratase family.

It localises to the cytoplasm. The catalysed reaction is D-erythro-1-(imidazol-4-yl)glycerol 3-phosphate = 3-(imidazol-4-yl)-2-oxopropyl phosphate + H2O. Its pathway is amino-acid biosynthesis; L-histidine biosynthesis; L-histidine from 5-phospho-alpha-D-ribose 1-diphosphate: step 6/9. This Pseudomonas fluorescens (strain Pf0-1) protein is Imidazoleglycerol-phosphate dehydratase.